A 141-amino-acid chain; its full sequence is MNFKYIIAVSFLIASTYARSVKNDEQSLSQRDVLDEESLREIRGIGGALLSAGKSALKGLAKGLAEHFANGKRTAEEHEVMKRLEAVMRDLDSLDHPEEASEKETRGFNQEEIANLFTKKEKRIIGPVLGLIGKALGGLLG.

Positions 1-18 (MNFKYIIAVSFLIASTYA) are cleaved as a signal peptide. The propeptide occupies 19 to 43 (RSVKNDEQSLSQRDVLDEESLREIR). Asn70 is subject to Asparagine amide. A propeptide spanning residues 74 to 123 (TAEEHEVMKRLEAVMRDLDSLDHPEEASEKETRGFNQEEIANLFTKKEKR) is cleaved from the precursor. At Leu140 the chain carries Leucine amide.

This sequence belongs to the bombinin family. Expressed by the skin glands.

It localises to the secreted. Its function is as follows. Antimicrobial peptide with activity against Gram-positive and -negative bacteria and fungi. Shows activity against P.acnes (MIC=5 uM), E.coli (MIC=5-6.3 uM), S.aureus (MIC=5-6.3 uM), M.luteus, S.cerevisiae and C.albicans (MIC=10-12.5 uM). Also reduces the production of interleukin (IL)-8 and granulocyte-macrophage colony stimulating factor (CSF2) in normal human epidermal keratinocytes (NHEKs). Shows anticancer activity against three human hepatoma cell lines. In vivo, using the rat ear edema model, suppress P.acnes-induced skin inflammation, significantly reducing the ear thickness. Shows weak hemolytic activity against human erythrocytes. Functionally, shows weak antimicrobial activity (tested on E.coli, S.aureus and C.albicans). Shows high hemolytic activity against human erythrocytes (38% erythrocyte lysis at 80.0 uM, and up to 85% at 159.7 uM). The sequence is that of Bombinins BLP-7/H-BO from Bombina orientalis (Oriental fire-bellied toad).